A 175-amino-acid chain; its full sequence is Endoribonuclease YbeY (175 aa).

3 residues coordinate Zn(2+): His-129, His-133, and His-139.

Belongs to the endoribonuclease YbeY family. Requires Zn(2+) as cofactor.

The protein localises to the cytoplasm. Functionally, single strand-specific metallo-endoribonuclease involved in late-stage 70S ribosome quality control and in maturation of the 3' terminus of the 16S rRNA. The polypeptide is Endoribonuclease YbeY (Lactobacillus gasseri (strain ATCC 33323 / DSM 20243 / BCRC 14619 / CIP 102991 / JCM 1131 / KCTC 3163 / NCIMB 11718 / NCTC 13722 / AM63)).